We begin with the raw amino-acid sequence, 496 residues long: Zinc finger and SCAN domain-containing protein 5C (496 aa).

Polar residues predominate over residues 1–19; sequence MAANCTSSWSLGESCNSPG. A disordered region spans residues 1–38; that stretch reads MAANCTSSWSLGESCNSPGSEPPQSMPSPATQLGNHDS. The 83-residue stretch at 44-126 folds into the SCAN box domain; that stretch reads HVNFRMFSCP…DLLRNNRRPK (83 aa). Disordered regions lie at residues 149–188 and 203–347; these read EAPA…TLPR and PETT…HPSG. Residues 161-171 show a composition bias toward polar residues; the sequence is VSSQRTSSVNQ. Over residues 210-223 the composition is skewed to basic and acidic residues; it reads GDPKALRPKPTLEK. Polar residues predominate over residues 234-247; sequence GLTSPEPQLPNSPT. Residues 253-263 are compositionally biased toward basic and acidic residues; it reads KEGKEPQKRAS. 5 C2H2-type zinc fingers span residues 356-378, 384-406, 412-434, 440-462, and 468-490; these read FACE…TRSH, FQCN…QRTH, YTCD…KRSH, FECK…QRIH, and HKCS…QKTH.

The protein resides in the nucleus. Functionally, may be involved in transcriptional regulation. The polypeptide is Zinc finger and SCAN domain-containing protein 5C (Homo sapiens (Human)).